The primary structure comprises 362 residues: Protein indeterminate-domain 16 (362 aa).

The segment at 1 to 22 (MELTQPIRENGDPQGHQLTDPD) is disordered. 2 consecutive C2H2-type zinc fingers follow at residues 39–61 (YVCE…RRRH) and 82–112 (YVCP…RRKH). The CCHC-type 1; atypical zinc finger occupies 118-142 (WVCERCSKGYAVQSDYKAHLKTCGS). 8 residues coordinate Zn(2+): Cys120, Cys123, His136, Cys140, Cys147, Cys149, His162, and Cys166. The segment at 145 to 168 (HSCDCGRVFSRVESFIEHQDTCTI) adopts a CCHC-type 2; atypical zinc-finger fold. Residues 155-167 (RVESFIEHQDTCT) are SHR-binding. The disordered stretch occupies residues 247–278 (SAQARHNEKRETSLTKERANEEARKAEETRQE). Residues 251–278 (RHNEKRETSLTKERANEEARKAEETRQE) are compositionally biased toward basic and acidic residues. Residues 252–319 (HNEKRETSLT…VREEAIKRIN (68 aa)) adopt a coiled-coil conformation.

Highly expressed in leaves, hypocotyls, roots, vasculature of cotyledons, floral organs and in the endodermis and vasculaturenof inflorescence stems.

Its subcellular location is the nucleus. In terms of biological role, transcription factor regulating lateral organ morphogenesis and gravitropic responses. Has a redundant role with IDD14 in directing leaf and floral organ morphogenesis. Acts cooperatively with IDD15 to control silique and branche orientation. Involved in the establishment of auxin gradients through the regulation of auxin biosynthesis and transport. This chain is Protein indeterminate-domain 16, found in Arabidopsis thaliana (Mouse-ear cress).